The chain runs to 171 residues: Photosystem I assembly protein Ycf3 (171 aa).

TPR repeat units follow at residues 35–68, 72–105, and 120–153; these read AFTYYRDGMSAQSEGEYAEALQNYYKAMRLEIDP, SYILYNIGLIHTSNGEHAKALEYYSQALERNPSL, and GEQAIQQGDPETSEAWFDQAAEYWKQAIALAPSN.

Belongs to the Ycf3 family.

Its subcellular location is the plastid. The protein resides in the chloroplast thylakoid membrane. Essential for the assembly of the photosystem I (PSI) complex. May act as a chaperone-like factor to guide the assembly of the PSI subunits. This Angiopteris evecta (Mule's foot fern) protein is Photosystem I assembly protein Ycf3.